Here is a 739-residue protein sequence, read N- to C-terminus: Probable beta-glucosidase L (739 aa).

Positions 1–17 are cleaved as a signal peptide; sequence MQNLFLSLLAAAVTVHA. Residue N224 is glycosylated (N-linked (GlcNAc...) asparagine). D252 is a catalytic residue. N398 carries N-linked (GlcNAc...) asparagine glycosylation.

It belongs to the glycosyl hydrolase 3 family.

Its subcellular location is the secreted. The enzyme catalyses Hydrolysis of terminal, non-reducing beta-D-glucosyl residues with release of beta-D-glucose.. It functions in the pathway glycan metabolism; cellulose degradation. Its function is as follows. Beta-glucosidases are one of a number of cellulolytic enzymes involved in the degradation of cellulosic biomass. Catalyzes the last step releasing glucose from the inhibitory cellobiose. This is Probable beta-glucosidase L (bglL) from Neosartorya fischeri (strain ATCC 1020 / DSM 3700 / CBS 544.65 / FGSC A1164 / JCM 1740 / NRRL 181 / WB 181) (Aspergillus fischerianus).